The following is a 101-amino-acid chain: Biogenesis of lysosome-related organelles complex 1 subunit SNN1 (101 aa).

A coiled-coil region spans residues 62–100 (DSNEYKAQFKEVNNLQKRLQKITLRLKDLERRSSQLTTS).

Belongs to the SNAPIN family. Component of the biogenesis of lysosome-related organelles complex-1 (BLOC-1).

It is found in the endosome. Its function is as follows. Component of the biogenesis of lysosome-related organelles complex-1 (BLOC-1), a complex involved in endosomal cargo sorting. This is Biogenesis of lysosome-related organelles complex 1 subunit SNN1 (SNN1) from Candida glabrata (strain ATCC 2001 / BCRC 20586 / JCM 3761 / NBRC 0622 / NRRL Y-65 / CBS 138) (Yeast).